The primary structure comprises 252 residues: 2-succinyl-6-hydroxy-2,4-cyclohexadiene-1-carboxylate synthase (252 aa).

Belongs to the AB hydrolase superfamily. MenH family. In terms of assembly, monomer.

The catalysed reaction is 5-enolpyruvoyl-6-hydroxy-2-succinyl-cyclohex-3-ene-1-carboxylate = (1R,6R)-6-hydroxy-2-succinyl-cyclohexa-2,4-diene-1-carboxylate + pyruvate. Its pathway is quinol/quinone metabolism; 1,4-dihydroxy-2-naphthoate biosynthesis; 1,4-dihydroxy-2-naphthoate from chorismate: step 3/7. The protein operates within quinol/quinone metabolism; menaquinone biosynthesis. Catalyzes a proton abstraction reaction that results in 2,5-elimination of pyruvate from 2-succinyl-5-enolpyruvyl-6-hydroxy-3-cyclohexene-1-carboxylate (SEPHCHC) and the formation of 2-succinyl-6-hydroxy-2,4-cyclohexadiene-1-carboxylate (SHCHC). The polypeptide is 2-succinyl-6-hydroxy-2,4-cyclohexadiene-1-carboxylate synthase (Citrobacter koseri (strain ATCC BAA-895 / CDC 4225-83 / SGSC4696)).